The following is a 644-amino-acid chain: 1,4-alpha-glucan branching enzyme GlgB (644 aa).

The Nucleophile role is filled by Asp309. Glu362 functions as the Proton donor in the catalytic mechanism.

The protein belongs to the glycosyl hydrolase 13 family. GlgB subfamily. As to quaternary structure, monomer.

The catalysed reaction is Transfers a segment of a (1-&gt;4)-alpha-D-glucan chain to a primary hydroxy group in a similar glucan chain.. It participates in glycan biosynthesis; glycogen biosynthesis. Catalyzes the formation of the alpha-1,6-glucosidic linkages in glycogen by scission of a 1,4-alpha-linked oligosaccharide from growing alpha-1,4-glucan chains and the subsequent attachment of the oligosaccharide to the alpha-1,6 position. The polypeptide is 1,4-alpha-glucan branching enzyme GlgB (Cutibacterium acnes (strain DSM 16379 / KPA171202) (Propionibacterium acnes)).